A 167-amino-acid polypeptide reads, in one-letter code: NAD(P)H-quinone oxidoreductase subunit I, chloroplastic (167 aa).

4Fe-4S ferredoxin-type domains follow at residues 55–84 and 95–124; these read GRIH…VDWK and LNYS…MTEE. Residues Cys64, Cys67, Cys70, Cys74, Cys104, Cys107, Cys110, and Cys114 each coordinate [4Fe-4S] cluster.

This sequence belongs to the complex I 23 kDa subunit family. NDH is composed of at least 16 different subunits, 5 of which are encoded in the nucleus. It depends on [4Fe-4S] cluster as a cofactor.

It localises to the plastid. The protein localises to the chloroplast thylakoid membrane. The catalysed reaction is a plastoquinone + NADH + (n+1) H(+)(in) = a plastoquinol + NAD(+) + n H(+)(out). It catalyses the reaction a plastoquinone + NADPH + (n+1) H(+)(in) = a plastoquinol + NADP(+) + n H(+)(out). In terms of biological role, NDH shuttles electrons from NAD(P)H:plastoquinone, via FMN and iron-sulfur (Fe-S) centers, to quinones in the photosynthetic chain and possibly in a chloroplast respiratory chain. The immediate electron acceptor for the enzyme in this species is believed to be plastoquinone. Couples the redox reaction to proton translocation, and thus conserves the redox energy in a proton gradient. The polypeptide is NAD(P)H-quinone oxidoreductase subunit I, chloroplastic (Pelargonium hortorum (Common geranium)).